An 871-amino-acid polypeptide reads, in one-letter code: Protein TIC 100 (871 aa).

The tract at residues 1–85 is disordered; the sequence is MANEELTESQ…NANPETNIRR (85 aa). Positions 8–20 are enriched in polar residues; it reads ESQQQEDPSQQLP. Over residues 30–46 the composition is skewed to low complexity; that stretch reads SDSNSDSDASSQSSGDD. MORN repeat units follow at residues 219–239, 243–257, and 337–352; these read YEGT…AENG, YEGE…GHGV, and YAGQ…CGVY. Residue N238 is modified to Deamidated asparagine. The stretch at 587–647 forms a coiled coil; the sequence is MLDGLEKWTE…QEEEKKTEMG (61 aa). 2 disordered regions span residues 631–654 and 669–721; these read EELK…EDED and KEKI…NSPF. Over residues 632–645 the composition is skewed to basic and acidic residues; the sequence is ELKKKEQEEEKKTE. T649 is subject to Phosphothreonine. Over residues 669–683 the composition is skewed to basic and acidic residues; sequence KEKIQENKQEEKYKD. Over residues 684–704 the composition is skewed to acidic residues; the sequence is DDDEDDDDGDDDDDDDDDDDL.

Part of the Tic complex. Component of the 1-MD complex, composed of TIC20-I, TIC214, TIC100 and TIC56. Interacts with the translocating preproteins. Hydrolysis of ATP is essential for the formation of this complex. The 1-MD complex interacts with TIC21. Preferentially expressed in ovules, and moderately expressed in leaves and siliques.

It is found in the plastid. Its subcellular location is the chloroplast inner membrane. Functionally, involved in protein precursor import into chloroplasts. May be part of an intermediate translocation complex acting as a protein-conducting channel at the inner envelope. Plays an important role during embryogenesis and chloroplast biogenesis. The polypeptide is Protein TIC 100 (Arabidopsis thaliana (Mouse-ear cress)).